Consider the following 297-residue polypeptide: MTDPLERSGLVVVDKPAGMTSHDVVGKLRRFFRTRKVGHAGTLDPMATGVLVVGIERGTKFLAHMVASTKAYDATIRLGTATHTDDAEGEATWGEPATAVEDSAIAREIAALTGDIMQRPAAVSAIKVDGKRAHERVRAGEEVELPARPVTVSRFDILATRREGEFIDLDVSVACSSGTYIRSLARDLGEALGVGGHLTALRRTEVGPFRLDDAHPLDALEDSPELSLSLDEALARSYPVLEVTDEEAQALAMGKWLEPRGLKGTYAAVDPQGRSIALIQEKGKRLATVFVARPSTL.

Asp44 functions as the Nucleophile in the catalytic mechanism.

It belongs to the pseudouridine synthase TruB family. Type 1 subfamily.

The enzyme catalyses uridine(55) in tRNA = pseudouridine(55) in tRNA. Functionally, responsible for synthesis of pseudouridine from uracil-55 in the psi GC loop of transfer RNAs. The chain is tRNA pseudouridine synthase B from Corynebacterium aurimucosum (strain ATCC 700975 / DSM 44827 / CIP 107346 / CN-1) (Corynebacterium nigricans).